The sequence spans 511 residues: ATP synthase subunit alpha (511 aa).

169 to 176 (GDRQTGKT) is a binding site for ATP.

The protein belongs to the ATPase alpha/beta chains family. As to quaternary structure, F-type ATPases have 2 components, CF(1) - the catalytic core - and CF(0) - the membrane proton channel. CF(1) has five subunits: alpha(3), beta(3), gamma(1), delta(1), epsilon(1). CF(0) has three main subunits: a(1), b(2) and c(9-12). The alpha and beta chains form an alternating ring which encloses part of the gamma chain. CF(1) is attached to CF(0) by a central stalk formed by the gamma and epsilon chains, while a peripheral stalk is formed by the delta and b chains.

It localises to the cell inner membrane. The enzyme catalyses ATP + H2O + 4 H(+)(in) = ADP + phosphate + 5 H(+)(out). Produces ATP from ADP in the presence of a proton gradient across the membrane. The alpha chain is a regulatory subunit. This Bartonella tribocorum (strain CIP 105476 / IBS 506) protein is ATP synthase subunit alpha.